The sequence spans 475 residues: Cytochrome P450 monooxygenase sthD (475 aa).

The N-terminal stretch at 1–17 (MAAYFLLGLYGSTLVYR) is a signal peptide. The chain crosses the membrane as a helical span at residues 276-296 (FIIIAGSDTVAATLTFAFFYL). Asn-336 is a glycosylation site (N-linked (GlcNAc...) asparagine). Position 418 (Cys-418) interacts with heme.

It belongs to the cytochrome P450 family. Heme is required as a cofactor.

It is found in the membrane. It catalyses the reaction betaenone A + NADPH + O2 + H(+) = stemphyloxin II + NADP(+) + H2O. It carries out the reaction betaenone C + NADPH + O2 + H(+) = stemphyloxin I + NADP(+) + H2O. Its pathway is mycotoxin biosynthesis. Functionally, cytochrome P450 monooxygenase; part of the gene cluster that mediates the biosynthesis of the phytotoxin stemphyloxin II. The first step of the pathway is the synthesis of dehydroprobetaenone I by the polyketide synthase sthA and the enoyl reductase sthE via condensation of one acetyl-CoA starter unit with 7 malonyl-CoA units and 5 methylations. The C-terminal reductase (R) domain of sthA catalyzes the reductive release of the polyketide chain. Because sthA lacks a designated enoylreductase (ER) domain, the required activity is provided the enoyl reductase sthE. The short-chain dehydrogenase/reductase sthC then catalyzes reduction of dehydroprobetaenone I to probetaenone I. The cytochrome P450 monooxygenase sthF catalyzes successive epoxidation, oxidation (resulting from epoxide opening) and hydroxylation to install a tertiary alcohol in the decaline ring to yield betaenone C from dehydroprobetaenone I and betaenone B from probetaenone I. The FAD-linked oxidoreductase sthB is responsible for the conversion of betaenone C to betaenone A via an intramolecular aldol reaction between C-1 and C-17 to form the bridged tricyclic system in betaenone A. Finally, the cytochrome P450 monooxygenase sthD catalyzes the hydroxylation of C-15 to afford the final metabolite stemphyloxin II. In Phaeosphaeria nodorum (strain SN15 / ATCC MYA-4574 / FGSC 10173) (Glume blotch fungus), this protein is Cytochrome P450 monooxygenase sthD.